We begin with the raw amino-acid sequence, 51 residues long: Defensin (51 aa).

Cystine bridges form between cysteine 3-cysteine 31, cysteine 17-cysteine 36, and cysteine 21-cysteine 38. Phenylalanine 51 carries the phenylalanine amide modification.

Its subcellular location is the secreted. Its function is as follows. Antibacterial peptide against Gram-positive and Gram-negative bacteria and fungi. This chain is Defensin, found in Bombus pascuorum (Common carder bumblebee).